Consider the following 298-residue polypeptide: Tryptophan 2,3-dioxygenase (298 aa).

Substrate is bound by residues 51 to 55, Y113, and R117; that span reads FIIQH. A heme-binding site is contributed by H240. T254 serves as a coordination point for substrate.

The protein belongs to the tryptophan 2,3-dioxygenase family. In terms of assembly, homotetramer. Heme serves as cofactor.

It carries out the reaction L-tryptophan + O2 = N-formyl-L-kynurenine. The protein operates within amino-acid degradation; L-tryptophan degradation via kynurenine pathway; L-kynurenine from L-tryptophan: step 1/2. Functionally, heme-dependent dioxygenase that catalyzes the oxidative cleavage of the L-tryptophan (L-Trp) pyrrole ring and converts L-tryptophan to N-formyl-L-kynurenine. Catalyzes the oxidative cleavage of the indole moiety. The polypeptide is Tryptophan 2,3-dioxygenase (Xanthomonas campestris pv. campestris (strain 8004)).